Consider the following 298-residue polypeptide: UDP-N-acetylenolpyruvoylglucosamine reductase (298 aa).

Positions 26–191 constitute an FAD-binding PCMH-type domain; the sequence is KTGGEAEYLA…LSATFSLKPG (166 aa). Residue arginine 170 is part of the active site. The active-site Proton donor is serine 220. Glutamate 290 is a catalytic residue.

The protein belongs to the MurB family. Requires FAD as cofactor.

The protein localises to the cytoplasm. The catalysed reaction is UDP-N-acetyl-alpha-D-muramate + NADP(+) = UDP-N-acetyl-3-O-(1-carboxyvinyl)-alpha-D-glucosamine + NADPH + H(+). It participates in cell wall biogenesis; peptidoglycan biosynthesis. In terms of biological role, cell wall formation. The polypeptide is UDP-N-acetylenolpyruvoylglucosamine reductase (Lactobacillus acidophilus (strain ATCC 700396 / NCK56 / N2 / NCFM)).